The following is a 1085-amino-acid chain: Solute carrier family 12 member 4 (1085 aa).

Over 1–119 (MPHFTVVPVD…RRAAEAPSMG (119 aa)) the chain is Cytoplasmic. Phosphoserine is present on residues Ser-24, Ser-47, Ser-51, Ser-81, and Ser-88. Residues 120 to 141 (TLMGVYLPCLQNIFGVILFLRL) traverse the membrane as a discontinuously helical segment. Positions 131 and 132 each coordinate K(+). Topologically, residues 142-149 (TWMVGTAG) are extracellular. Residues 150-172 (VLQALLIVLICCCCTLLTAISMS) form a helical membrane-spanning segment. Topologically, residues 173–196 (AIATNGVVPAGGSYFMISRSLGPE) are cytoplasmic. A helical membrane pass occupies residues 197-225 (FGGAVGLCFYLGTTFAAAMYILGAIEILL). Tyr-216 contacts K(+). At 226 to 248 (TYIAPPAAIFYPSGAHDTSNATL) the chain is on the extracellular side. Residue Asn-245 is glycosylated (N-linked (GlcNAc...) asparagine). 2 helical membrane-spanning segments follow: residues 249–271 (NNMR…VGVK) and 272–297 (YVNK…GGIK). Residues 298 to 419 (SIFDPPVFPV…LYVVADIATS (122 aa)) are Extracellular-facing. An intrachain disulfide couples Cys-308 to Cys-323. N-linked (GlcNAc...) asparagine glycosylation is found at Asn-312, Asn-331, Asn-347, and Asn-361. Cys-343 and Cys-353 are joined by a disulfide. A helical membrane pass occupies residues 420 to 440 (FTVLVGIFFPSVTGIMAGSNR). 2 residues coordinate K(+): Pro-429 and Thr-432. Residues Gly-433, Ile-434, and Met-435 each contribute to the chloride site. Residues 441–450 (SGDLRDAQKS) lie on the Cytoplasmic side of the membrane. A helical membrane pass occupies residues 451–473 (IPVGTILAIITTSLVYFSSVVLF). The Extracellular segment spans residues 474–504 (GACIEGVVLRDKYGDGVSRNLVVGTLAWPSP). Residues 505–531 (WVIVIGSFFSTCGAGLQSLTGAPRLLQ) form a helical membrane-spanning segment. Residues 532–554 (AIAKDNIIPFLRVFGHGKVNGEP) lie on the Cytoplasmic side of the membrane. Helical transmembrane passes span 555–575 (TWAL…ASLD) and 576–598 (MVAP…ACAV). Chloride is bound at residue Tyr-589. Over 599–612 (QTLLRTPNWRPRFK) the chain is Cytoplasmic. 2 consecutive transmembrane segments (helical) span residues 613–635 (YYHW…VSSW) and 636–651 (YYAL…IYKY). Over 652-1085 (IEYQGAEKEW…GGREVITIYS (434 aa)) the chain is Cytoplasmic. Residues 665-681 (IRGLSLSAARYALLRLE) are scissor helix. Leu-697, Lys-699, Lys-707, Tyr-708, and Val-730 together coordinate ATP. The residue at position 734 (Ser-734) is a Phosphoserine. Residues Gly-794, Trp-795, and Tyr-797 each coordinate ATP. 2 positions are modified to phosphoserine: Ser-916 and Ser-967. Phosphothreonine is present on Thr-983. Phosphoserine is present on Ser-1050.

This sequence belongs to the SLC12A transporter family. K/Cl co-transporter subfamily. In terms of assembly, homodimer; adopts a domain-swap conformation at the scissor helices connecting the transmembrane domain and C-terminal domain. Heterodimer with other K-Cl cotransporters. Phosphorylated, phosphorylation may regulate transporter activity. As to expression, ubiquitous. Levels are much higher in erythrocytes from patients with Hb SC and Hb SS compared to normal AA erythrocytes. This may contribute to red blood cell dehydration and to the manifestation of sickle cell disease by increasing the intracellular concentration of HbS. In terms of tissue distribution, not detected in circulating reticulocytes.

The protein localises to the cell membrane. It catalyses the reaction K(+)(in) + chloride(in) = K(+)(out) + chloride(out). Its activity is regulated as follows. Inhibited by WNK3. Mediates electroneutral potassium-chloride cotransport when activated by cell swelling. May contribute to cell volume homeostasis in single cells. May be involved in the regulation of basolateral Cl(-) exit in NaCl absorbing epithelia. In terms of biological role, no transporter activity. The protein is Solute carrier family 12 member 4 of Homo sapiens (Human).